We begin with the raw amino-acid sequence, 370 residues long: Asporin (370 aa).

A signal peptide spans Met-1–Ala-15. Ser-45 carries O-linked (GalNAc...) serine glycosylation. An LRRNT domain is found at Phe-56–Phe-92. Disulfide bonds link Cys-65–Cys-71 and Cys-69–Cys-78. LRR repeat units follow at residues Asp-93–Gly-114, Ser-117–Thr-138, Lys-141–Leu-163, Ala-164–Gly-183, Ala-186–Gly-209, Thr-232–Arg-253, Asp-256–Asn-277, Arg-280–Lys-302, Tyr-303–Pro-324, Ser-332–Phe-354, and Arg-355–Lys-370. An N-linked (GlcNAc...) asparagine glycan is attached at Asn-272. Cys-323 and Cys-356 are disulfide-bonded.

This sequence belongs to the small leucine-rich proteoglycan (SLRP) family. SLRP class I subfamily.

It localises to the secreted. The protein resides in the extracellular space. The protein localises to the extracellular matrix. The polypeptide is Asporin (ASPN) (Bos taurus (Bovine)).